An 87-amino-acid chain; its full sequence is Cell division topological specificity factor (87 aa).

The protein belongs to the MinE family.

Prevents the cell division inhibition by proteins MinC and MinD at internal division sites while permitting inhibition at polar sites. This ensures cell division at the proper site by restricting the formation of a division septum at the midpoint of the long axis of the cell. In Neisseria meningitidis serogroup C (strain 053442), this protein is Cell division topological specificity factor.